The primary structure comprises 54 residues: Small ribosomal subunit protein uS14 (54 aa).

Residues cysteine 19, cysteine 22, cysteine 37, and cysteine 40 each contribute to the Zn(2+) site.

Belongs to the universal ribosomal protein uS14 family. Zinc-binding uS14 subfamily. As to quaternary structure, part of the 30S ribosomal subunit. Zn(2+) is required as a cofactor.

In terms of biological role, binds 16S rRNA, required for the assembly of 30S particles. The protein is Small ribosomal subunit protein uS14 of Saccharolobus solfataricus (strain ATCC 35092 / DSM 1617 / JCM 11322 / P2) (Sulfolobus solfataricus).